The chain runs to 371 residues: Glutamate 5-kinase (371 aa).

Lys-14 lines the ATP pocket. Substrate contacts are provided by Ser-54, Asp-141, and Asn-153. An ATP-binding site is contributed by 173–174 (TD). Positions 280–357 (AGSLIVDAGA…SDIEQLLGYI (78 aa)) constitute a PUA domain.

Belongs to the glutamate 5-kinase family.

It localises to the cytoplasm. It catalyses the reaction L-glutamate + ATP = L-glutamyl 5-phosphate + ADP. The protein operates within amino-acid biosynthesis; L-proline biosynthesis; L-glutamate 5-semialdehyde from L-glutamate: step 1/2. Catalyzes the transfer of a phosphate group to glutamate to form L-glutamate 5-phosphate. The protein is Glutamate 5-kinase of Azoarcus sp. (strain BH72).